Reading from the N-terminus, the 355-residue chain is Tetraacyldisaccharide 4'-kinase (355 aa).

49–56 (SAGGTGKT) is an ATP binding site.

The protein belongs to the LpxK family.

It catalyses the reaction a lipid A disaccharide + ATP = a lipid IVA + ADP + H(+). Its pathway is glycolipid biosynthesis; lipid IV(A) biosynthesis; lipid IV(A) from (3R)-3-hydroxytetradecanoyl-[acyl-carrier-protein] and UDP-N-acetyl-alpha-D-glucosamine: step 6/6. In terms of biological role, transfers the gamma-phosphate of ATP to the 4'-position of a tetraacyldisaccharide 1-phosphate intermediate (termed DS-1-P) to form tetraacyldisaccharide 1,4'-bis-phosphate (lipid IVA). The chain is Tetraacyldisaccharide 4'-kinase from Chlorobium phaeobacteroides (strain DSM 266 / SMG 266 / 2430).